A 582-amino-acid polypeptide reads, in one-letter code: ATP-dependent lipid A-core flippase (582 aa).

The next 5 membrane-spanning stretches (helical) occupy residues 16–36 (LWPH…ALVI), 69–89 (FIIL…GYCM), 153–173 (IIGL…VLVV), 250–270 (LANP…LYLA), and 275–295 (IKET…FGLL). Positions 29-310 (VAVVALVINA…LTSVTSDFQR (282 aa)) constitute an ABC transmembrane type-1 domain. In terms of domain architecture, ABC transporter spans 342–578 (IKVDNVTFTY…DGAYAQLHRI (237 aa)). 376–383 (GRSGSGKS) lines the ATP pocket.

This sequence belongs to the ABC transporter superfamily. Lipid exporter (TC 3.A.1.106) family. Homodimer.

It is found in the cell inner membrane. The enzyme catalyses ATP + H2O + lipid A-core oligosaccharideSide 1 = ADP + phosphate + lipid A-core oligosaccharideSide 2.. Functionally, involved in lipopolysaccharide (LPS) biosynthesis. Translocates lipid A-core from the inner to the outer leaflet of the inner membrane. Transmembrane domains (TMD) form a pore in the inner membrane and the ATP-binding domain (NBD) is responsible for energy generation. In Aliivibrio fischeri (strain ATCC 700601 / ES114) (Vibrio fischeri), this protein is ATP-dependent lipid A-core flippase.